Reading from the N-terminus, the 221-residue chain is Large ribosomal subunit protein uL3 (221 aa).

It belongs to the universal ribosomal protein uL3 family. In terms of assembly, part of the 50S ribosomal subunit. Forms a cluster with proteins L14 and L19.

In terms of biological role, one of the primary rRNA binding proteins, it binds directly near the 3'-end of the 23S rRNA, where it nucleates assembly of the 50S subunit. In Chlamydia felis (strain Fe/C-56) (Chlamydophila felis), this protein is Large ribosomal subunit protein uL3.